The primary structure comprises 67 residues: Small ribosomal subunit protein bS21 (67 aa).

This sequence belongs to the bacterial ribosomal protein bS21 family.

This Nitratidesulfovibrio vulgaris (strain DSM 19637 / Miyazaki F) (Desulfovibrio vulgaris) protein is Small ribosomal subunit protein bS21.